Consider the following 148-residue polypeptide: Large ribosomal subunit protein bL9 (148 aa).

Belongs to the bacterial ribosomal protein bL9 family.

In terms of biological role, binds to the 23S rRNA. This chain is Large ribosomal subunit protein bL9, found in Ruminiclostridium cellulolyticum (strain ATCC 35319 / DSM 5812 / JCM 6584 / H10) (Clostridium cellulolyticum).